The following is a 485-amino-acid chain: Glutamyl-tRNA(Gln) amidotransferase subunit A (485 aa).

Catalysis depends on charge relay system residues lysine 79 and serine 154. The active-site Acyl-ester intermediate is the serine 178.

This sequence belongs to the amidase family. GatA subfamily. In terms of assembly, heterotrimer of A, B and C subunits.

It carries out the reaction L-glutamyl-tRNA(Gln) + L-glutamine + ATP + H2O = L-glutaminyl-tRNA(Gln) + L-glutamate + ADP + phosphate + H(+). Its function is as follows. Allows the formation of correctly charged Gln-tRNA(Gln) through the transamidation of misacylated Glu-tRNA(Gln) in organisms which lack glutaminyl-tRNA synthetase. The reaction takes place in the presence of glutamine and ATP through an activated gamma-phospho-Glu-tRNA(Gln). The sequence is that of Glutamyl-tRNA(Gln) amidotransferase subunit A from Staphylococcus aureus.